A 459-amino-acid chain; its full sequence is tRNA modification GTPase MnmE (459 aa).

3 residues coordinate (6S)-5-formyl-5,6,7,8-tetrahydrofolate: arginine 23, glutamate 88, and arginine 127. In terms of domain architecture, TrmE-type G spans glycine 223–phenylalanine 381. Residue asparagine 233 coordinates K(+). GTP is bound by residues asparagine 233 to serine 238, threonine 252 to threonine 258, and aspartate 277 to glycine 280. Serine 237 is a binding site for Mg(2+). K(+)-binding residues include threonine 252, isoleucine 254, and threonine 257. Threonine 258 contacts Mg(2+). Lysine 459 is a binding site for (6S)-5-formyl-5,6,7,8-tetrahydrofolate.

Belongs to the TRAFAC class TrmE-Era-EngA-EngB-Septin-like GTPase superfamily. TrmE GTPase family. Homodimer. Heterotetramer of two MnmE and two MnmG subunits. The cofactor is K(+).

It is found in the cytoplasm. Functionally, exhibits a very high intrinsic GTPase hydrolysis rate. Involved in the addition of a carboxymethylaminomethyl (cmnm) group at the wobble position (U34) of certain tRNAs, forming tRNA-cmnm(5)s(2)U34. In Clostridium kluyveri (strain ATCC 8527 / DSM 555 / NBRC 12016 / NCIMB 10680 / K1), this protein is tRNA modification GTPase MnmE.